Reading from the N-terminus, the 387-residue chain is S-adenosylmethionine synthase (387 aa).

His-16 provides a ligand contact to ATP. A Mg(2+)-binding site is contributed by Asp-18. Glu-44 is a K(+) binding site. Residues Glu-57 and Gln-100 each coordinate L-methionine. The flexible loop stretch occupies residues 100–110 (QSPDIAQGVDR). Residues 167–169 (DAK), 232–233 (RF), Asp-241, 247–248 (RK), Ala-264, and Lys-268 contribute to the ATP site. Residue Asp-241 participates in L-methionine binding. L-methionine is bound at residue Lys-272.

The protein belongs to the AdoMet synthase family. As to quaternary structure, homotetramer; dimer of dimers. Requires Mg(2+) as cofactor. It depends on K(+) as a cofactor.

Its subcellular location is the cytoplasm. The catalysed reaction is L-methionine + ATP + H2O = S-adenosyl-L-methionine + phosphate + diphosphate. Its pathway is amino-acid biosynthesis; S-adenosyl-L-methionine biosynthesis; S-adenosyl-L-methionine from L-methionine: step 1/1. Catalyzes the formation of S-adenosylmethionine (AdoMet) from methionine and ATP. The overall synthetic reaction is composed of two sequential steps, AdoMet formation and the subsequent tripolyphosphate hydrolysis which occurs prior to release of AdoMet from the enzyme. This is S-adenosylmethionine synthase from Cupriavidus necator (strain ATCC 17699 / DSM 428 / KCTC 22496 / NCIMB 10442 / H16 / Stanier 337) (Ralstonia eutropha).